The following is a 502-amino-acid chain: T-complex protein 11-like X-linked protein 1 (502 aa).

A disordered region spans residues 1 to 36 (MPKTEETVLQNDPSVAENGAPEPKTPGQSQKSKSFC).

It belongs to the TCP11 family.

This Homo sapiens (Human) protein is T-complex protein 11-like X-linked protein 1.